The chain runs to 311 residues: Cytosolic Fe-S cluster assembly factor Nubp1 homolog (311 aa).

The [4Fe-4S] cluster site is built by cysteine 9, cysteine 23, cysteine 26, and cysteine 32. Position 63 to 70 (63 to 70 (GKGGVGKS)) interacts with ATP. [4Fe-4S] cluster-binding residues include cysteine 240 and cysteine 243.

It belongs to the Mrp/NBP35 ATP-binding proteins family. NUBP1/NBP35 subfamily. In terms of assembly, heterotetramer of 2 Nubp1 and 2 Nubp2 chains. Requires [4Fe-4S] cluster as cofactor.

The protein localises to the cytoplasm. In terms of biological role, component of the cytosolic iron-sulfur (Fe/S) protein assembly (CIA) machinery. Required for maturation of extramitochondrial Fe-S proteins. The Nubp1-Nubp2 heterotetramer forms a Fe-S scaffold complex, mediating the de novo assembly of an Fe-S cluster and its transfer to target apoproteins. This Drosophila erecta (Fruit fly) protein is Cytosolic Fe-S cluster assembly factor Nubp1 homolog.